A 261-amino-acid chain; its full sequence is NAD-capped RNA hydrolase NudC (261 aa).

Arg-74 provides a ligand contact to substrate. Zn(2+)-binding residues include Cys-103, Cys-106, Cys-121, and Cys-124. Substrate is bound at residue Tyr-129. The region spanning 130 to 253 (PRIFPCIIVA…TIARALIEQT (124 aa)) is the Nudix hydrolase domain. Residues Ala-163, Glu-179, and Glu-183 each coordinate a divalent metal cation. The Nudix box signature appears at 164-185 (GFVEVGETLEQCVAREVKEETG). 197 to 204 (QPWAFPSS) provides a ligand contact to substrate. Glu-224 lines the a divalent metal cation pocket. Residue Ala-246 coordinates substrate.

Belongs to the Nudix hydrolase family. NudC subfamily. In terms of assembly, homodimer. Requires Mg(2+) as cofactor. Mn(2+) serves as cofactor. The cofactor is Zn(2+).

The enzyme catalyses a 5'-end NAD(+)-phospho-ribonucleoside in mRNA + H2O = a 5'-end phospho-adenosine-phospho-ribonucleoside in mRNA + beta-nicotinamide D-ribonucleotide + 2 H(+). It catalyses the reaction NAD(+) + H2O = beta-nicotinamide D-ribonucleotide + AMP + 2 H(+). The catalysed reaction is NADH + H2O = reduced beta-nicotinamide D-ribonucleotide + AMP + 2 H(+). Its function is as follows. mRNA decapping enzyme that specifically removes the nicotinamide adenine dinucleotide (NAD) cap from a subset of mRNAs by hydrolyzing the diphosphate linkage to produce nicotinamide mononucleotide (NMN) and 5' monophosphate mRNA. The NAD-cap is present at the 5'-end of some mRNAs and stabilizes RNA against 5'-processing. Has preference for mRNAs with a 5'-end purine. Catalyzes the hydrolysis of a broad range of dinucleotide pyrophosphates. This Vibrio vulnificus (strain CMCP6) protein is NAD-capped RNA hydrolase NudC.